We begin with the raw amino-acid sequence, 478 residues long: MALGFIKKVFSFGKDKAETEERPQEDAALERGNENASFEAALSDAEAHDAVDKDPVSELEMETAGGPAADEAVDVAPAEDDEEEDAPLLPGAELSGDMGLVPLSLLQAEAAAEEQGEPLPEPLDAGLDADAMDALLNEAEAASAVESPAIPPVLPKGFSSAREREEPVPVAPQVKLTWFQRLRAGLARTSSQLTTQISALFTKRKLDEDTLDELEDLLIQSDLGVETAMRITGALSSERYGKDVSGEDVARIMAGEITKVLKPVAKPLELDLSHKPHVILVVGVNGTGKTTTIGKLAAKLSGSGLKVMLAAGDTFRAAAIEQLKIWADRTGSEFIGTKLGADAAGLAYDAYEQARAQKSDVLIIDTAGRLQNKTELMAELEKIVRVLGKLDPDAPHTVLQTLDATTGQNAMNQVEIFRNVAGVSGLIMTKLDGTARGGILVAIAAKHKLPVYFIGVGEGVEDLEPFEAEDFAKAIAGV.

Basic and acidic residues-rich tracts occupy residues 14–33 (KDKA…ERGN) and 45–56 (AEAHDAVDKDPV). Positions 14-94 (KDKAETEERP…DAPLLPGAEL (81 aa)) are disordered. Residues 71-86 (EAVDVAPAEDDEEEDA) show a composition bias toward acidic residues. GTP-binding positions include 283 to 290 (GVNGTGKT), 365 to 369 (DTAGR), and 429 to 432 (TKLD).

The protein belongs to the GTP-binding SRP family. FtsY subfamily. In terms of assembly, part of the signal recognition particle protein translocation system, which is composed of SRP and FtsY. SRP is a ribonucleoprotein composed of Ffh and a 4.5S RNA molecule.

Its subcellular location is the cell inner membrane. It localises to the cytoplasm. It carries out the reaction GTP + H2O = GDP + phosphate + H(+). Functionally, involved in targeting and insertion of nascent membrane proteins into the cytoplasmic membrane. Acts as a receptor for the complex formed by the signal recognition particle (SRP) and the ribosome-nascent chain (RNC). Interaction with SRP-RNC leads to the transfer of the RNC complex to the Sec translocase for insertion into the membrane, the hydrolysis of GTP by both Ffh and FtsY, and the dissociation of the SRP-FtsY complex into the individual components. The protein is Signal recognition particle receptor FtsY of Agrobacterium fabrum (strain C58 / ATCC 33970) (Agrobacterium tumefaciens (strain C58)).